Consider the following 699-residue polypeptide: TPR repeat-containing thioredoxin TTL1 (699 aa).

The segment at 1–211 (MPKSVKPISE…SSSRSSSTVA (211 aa)) is disordered. Residues 9–20 (SESDKLSDHLRD) are compositionally biased toward basic and acidic residues. Ser-39 and Ser-42 each carry phosphoserine. 2 stretches are compositionally biased toward low complexity: residues 52 to 70 (TTTTTTTTTSSSSSSSSGS) and 83 to 135 (RSNS…TSPA). The span at 166–182 (SGTGTYGHGSIMRGGGI) shows a compositional bias: gly residues. Over residues 195 to 210 (NSPVNVGSSSRSSSTV) the composition is skewed to low complexity. 7 TPR repeats span residues 227–260 (SEEVKRVGNEMYRKGLFNEALKLYDRAIALSPTN), 262–294 (AYRSNRAAALIGLSRIGEAVKECEDAVRSDPNY), 296–328 (RAHHRLALLLIRLGQVNSARKHLCFLGRPSDPM), 419–452 (AYIYFVKAQIEMALGRFENAVMAAEKASQIDPRC), 465–498 (VARARARGNDLYKSERYTEASSAYAEGLRLDPCN), 499–532 (AILYCNRAACWFKLGMWERSIEDCNQALRYQPSY), and 534–566 (KPLLRRAASNSKMERWGAAVSDYEALIRELPHD). The Thioredoxin domain maps to 605 to 691 (QFKSAMNLPG…IVCPSKEVLE (87 aa)).

In terms of tissue distribution, expressed in the root elongation zone, stele, root cap, embryo vascular system, leaf axilar buds, silique abscission zone and guard cells.

Its function is as follows. Involved in responses to osmotic stress and abscisic acid (ABA). May act as a positive regulator of ABA signaling during germination and seedling development under stress. This is TPR repeat-containing thioredoxin TTL1 (TTL1) from Arabidopsis thaliana (Mouse-ear cress).